Reading from the N-terminus, the 491-residue chain is MEEPTPEEEGGITIMSKSRKNPKTVVNIQSQKLDSDQNTPQFEKFTNPNPSSDTTSATNFEGLGLAEWAVETCKELGMRKPTPVQTHCVPKILAGRDVLGLAQTGSGKTAAFALPILHRLAEDPYGVFALVVTPTRELAFQLAEQFKALGSCLNLRCSVIVGGMDMLTQTMSLVSRPHIVITTPGRIKVLLENNPDVPPVFSRTKFLVLDEADRVLDVGFQDELRTIFQCLPKSRQTLLFSATMTSNLQALLEHSSNKAYFYEAYEGLKTVDTLTQQFIFEDKDAKELYLVHILSQMEDKGIRSAMIFVSTCRTCQRLSLMLDELEVENIAMHSLNSQSMRLSALSKFKSGKVPILLATDVASRGLDIPTVDLVINYDIPRDPRDYVHRVGRTARAGRGGLAVSIITETDVKLIHKIEEEVGKKMEPYNKKVITDSLEVTKVSKAKRVAMMKMLDNGFEDKVKDRRKLKRKTLADKGLLKKRGKRQKSTEN.

Positions 1 to 10 (MEEPTPEEEG) are enriched in acidic residues. The disordered stretch occupies residues 1 to 56 (MEEPTPEEEGGITIMSKSRKNPKTVVNIQSQKLDSDQNTPQFEKFTNPNPSSDTTS). Over residues 24–56 (TVVNIQSQKLDSDQNTPQFEKFTNPNPSSDTTS) the composition is skewed to polar residues. The short motif at 58-86 (TNFEGLGLAEWAVETCKELGMRKPTPVQT) is the Q motif element. Residues 89 to 262 (VPKILAGRDV…EHSSNKAYFY (174 aa)) enclose the Helicase ATP-binding domain. 102-109 (AQTGSGKT) lines the ATP pocket. A DEAD box motif is present at residues 210–213 (DEAD). A Helicase C-terminal domain is found at 289–438 (YLVHILSQME…NKKVITDSLE (150 aa)). The tract at residues 471–491 (KTLADKGLLKKRGKRQKSTEN) is disordered. The span at 479 to 491 (LKKRGKRQKSTEN) shows a compositional bias: basic residues.

The protein belongs to the DEAD box helicase family. DDX49/DBP8 subfamily.

The catalysed reaction is ATP + H2O = ADP + phosphate + H(+). This chain is DEAD-box ATP-dependent RNA helicase 36 (RH36), found in Arabidopsis thaliana (Mouse-ear cress).